The following is a 242-amino-acid chain: Transcriptional activator protein RaiR (242 aa).

Positions 177-242 (KVADLPRLSR…EQLLGPRRSN (66 aa)) constitute an HTH luxR-type domain. The H-T-H motif DNA-binding region spans 201–220 (AKQICARLSISVSAVQLYLA).

The protein belongs to the autoinducer-regulated transcriptional regulatory protein family.

The chain is Transcriptional activator protein RaiR (raiR) from Rhizobium etli.